Consider the following 200-residue polypeptide: MQMQAARPRVGVRPRGGIRPFPLPTLSFNNNSNRSACACACAVSVSDSELAARGFAVRRSSTGLDVGALNEVFARVGFPRRQEERLRRALEHSEVVWLEDSASSSAGRPVAFARAAGDGVFNAVVWDVVVEPSCQGLGLGRAVMERLVADLRGKGVSNIALYAEPRVVGFYRLLGFAMDPDAIRGMAFYRSRQQIQNTSS.

Residues 1 to 41 constitute a chloroplast transit peptide; it reads MQMQAARPRVGVRPRGGIRPFPLPTLSFNNNSNRSACACAC. Residues 55–195 enclose the N-acetyltransferase domain; that stretch reads FAVRRSSTGL…MAFYRSRQQI (141 aa).

It localises to the cytoplasm. The protein resides in the plastid. It is found in the chloroplast. The catalysed reaction is serotonin + acetyl-CoA = N-acetylserotonin + CoA + H(+). It catalyses the reaction tyramine + acetyl-CoA = N-acetyltyramine + CoA + H(+). The enzyme catalyses tryptamine + acetyl-CoA = N-acetyltryptamine + CoA + H(+). It carries out the reaction 5-methoxytryptamine + acetyl-CoA = melatonin + CoA + H(+). It functions in the pathway aromatic compound metabolism; melatonin biosynthesis; melatonin from serotonin: step 1/2. Its function is as follows. Catalyzes the N-acetylation of serotonin into N-acetylserotonin, the penultimate step in the synthesis of melatonin. Catalyzes in vitro the N-acetylation of tryptamine to produce N-acetyltryptamine, 5-methoxytryptamine to produce melatonin and tyramine to produce N-acetyltyramine. The protein is Serotonin N-acetyltransferase 2, chloroplastic of Oryza sativa subsp. japonica (Rice).